Reading from the N-terminus, the 74-residue chain is Large ribosomal subunit protein uL30 (74 aa).

This sequence belongs to the universal ribosomal protein uL30 family. Part of the 50S ribosomal subunit.

The polypeptide is Large ribosomal subunit protein uL30 (Micrococcus luteus (strain ATCC 4698 / DSM 20030 / JCM 1464 / CCM 169 / CCUG 5858 / IAM 1056 / NBRC 3333 / NCIMB 9278 / NCTC 2665 / VKM Ac-2230) (Micrococcus lysodeikticus)).